The following is a 424-amino-acid chain: Histidinol dehydrogenase (424 aa).

Residues tyrosine 124, glutamine 186, and asparagine 209 each coordinate NAD(+). Residues serine 232, glutamine 254, and histidine 257 each contribute to the substrate site. The Zn(2+) site is built by glutamine 254 and histidine 257. Active-site proton acceptor residues include glutamate 322 and histidine 323. Positions 323, 356, 410, and 415 each coordinate substrate. Aspartate 356 is a Zn(2+) binding site. Position 415 (histidine 415) interacts with Zn(2+).

The protein belongs to the histidinol dehydrogenase family. The cofactor is Zn(2+).

It catalyses the reaction L-histidinol + 2 NAD(+) + H2O = L-histidine + 2 NADH + 3 H(+). It participates in amino-acid biosynthesis; L-histidine biosynthesis; L-histidine from 5-phospho-alpha-D-ribose 1-diphosphate: step 9/9. Its function is as follows. Catalyzes the sequential NAD-dependent oxidations of L-histidinol to L-histidinaldehyde and then to L-histidine. The polypeptide is Histidinol dehydrogenase (Moorella thermoacetica (strain ATCC 39073 / JCM 9320)).